A 113-amino-acid chain; its full sequence is UPF0482 protein YnfB (113 aa).

An N-terminal signal peptide occupies residues 1 to 28 (MKITLSKRIGLLAFLLPCALALSTTVHA).

This sequence belongs to the UPF0482 family.

In Shigella flexneri serotype 5b (strain 8401), this protein is UPF0482 protein YnfB.